We begin with the raw amino-acid sequence, 511 residues long: Phosphoenolpyruvate carboxylase (511 aa).

Belongs to the PEPCase type 2 family. In terms of assembly, homotetramer. Requires Mg(2+) as cofactor.

It catalyses the reaction oxaloacetate + phosphate = phosphoenolpyruvate + hydrogencarbonate. Allosterically inhibited by L-aspartate and L-malate. PEPC activity is not affected by allosteric activators of E.coli PEPC such as glucose 6-phosphate, fructose 1,6-bisphosphate, and acetyl coenzyme A. In terms of biological role, catalyzes the irreversible beta-carboxylation of phosphoenolpyruvate (PEP) to form oxaloacetate (OAA), a four-carbon dicarboxylic acid source for the tricarboxylic acid cycle. This chain is Phosphoenolpyruvate carboxylase, found in Saccharolobus solfataricus (strain ATCC 35092 / DSM 1617 / JCM 11322 / P2) (Sulfolobus solfataricus).